The chain runs to 197 residues: Phosphoheptose isomerase (197 aa).

Positions 36–197 (MVNALLNEGK…IDSQLFGSEE (162 aa)) constitute an SIS domain. Residue 51–53 (NGG) coordinates substrate. Positions 60 and 64 each coordinate Zn(2+). Substrate contacts are provided by residues Glu64, 93–94 (ND), 119–121 (STS), Ser124, and Gln174. Positions 174 and 182 each coordinate Zn(2+).

It belongs to the SIS family. GmhA subfamily. As to quaternary structure, homotetramer. The cofactor is Zn(2+).

The protein localises to the cytoplasm. It catalyses the reaction 2 D-sedoheptulose 7-phosphate = D-glycero-alpha-D-manno-heptose 7-phosphate + D-glycero-beta-D-manno-heptose 7-phosphate. It participates in carbohydrate biosynthesis; D-glycero-D-manno-heptose 7-phosphate biosynthesis; D-glycero-alpha-D-manno-heptose 7-phosphate and D-glycero-beta-D-manno-heptose 7-phosphate from sedoheptulose 7-phosphate: step 1/1. Its function is as follows. Catalyzes the isomerization of sedoheptulose 7-phosphate in D-glycero-D-manno-heptose 7-phosphate. The sequence is that of Phosphoheptose isomerase from Pseudomonas fluorescens (strain SBW25).